A 316-amino-acid polypeptide reads, in one-letter code: Probable cell division protein WhiA (316 aa).

The H-T-H motif DNA-binding region spans 275–309 (TLKELGEMVSGGKISKSGINHRLRKIDEIAEKLRA).

This sequence belongs to the WhiA family.

Involved in cell division and chromosome segregation. This is Probable cell division protein WhiA from Bacillus cereus (strain B4264).